A 966-amino-acid chain; its full sequence is MKIHHFLTLLCTFLPLTTTALTNSTPLSLLGPCYKRCVTKFGETKEQLTNAETISLEYDVSNNTEFSLCKLGCNSHEYTDLNLAAFRYGQLAYQKILTTVEDVPTRGTVLNDVFIVCLDTSFMPSNNSAPSAKRLLSGTVLLVLDEDVAKADNVFLIEVLARNADKSAVQVISQQWCYSSNCNITFNAPTEVSSFDVRLRVSTFDSNGQVGGINFSKWHNINQILTKTFVDMSLKSVVWKAEKAAANFVFNLTASDHVPACSLQMIYRSSLSSELLHRNFYLDHTLEVFVNNLDFDKIYTMQLAPSGTHDRSTPSLASAVIEIPPCRHLVDDYSMCAPPPVSSLSYNWNLSPTSEYELLIKWKLLNYMDGLNVTEELSIPVAYFLLNAHPLITANNEQCEKYEKIRRVVSYGLRELVFHVPDTDCNYEVEMTAVDTNQRISEVKKIQVFRFNVPPYVSFLQASDIPTSVELMAVVLATSAIFALIALFLLYRKRKRDKKARFQMYKDAEAGVSYDYVATTESLGSVVQIRSTNFRFEPVENIDGNIEAALAQQQKFEGGTMNSMFRTYYNLDHPVKVPAHMAEASSDEDNGYENIRYSYFGSELSDDVFEEDIYMTHKSLSIYCQDSPLTTPMAPIAPYEHFDDIPSHQYRNFQVHNFNERIEKQAYWLMATVVDVVRRELYSLKVPKDYTPETISAMRKELEFLRTLAPHGNCRRFEGVVIGRWDDLPRQVIGILIENTRGGTLRNYIAAVGSVFRNCSLATDHDSFASQQDMNSTQHPFDKLSTEADENNSKKVKIQEITDSLSIRFCQFAEQVSSALEHLHSAGSVHTRVTTLNIYLLHNYSDPFDMLPDQVVKLGNFGFAVQNSEDVVLDDNLQPPEVIKGEKYEARGDIWQFGLCLAEMCSLGDLEQSEVGTLKSGHDTFKNLPSTQVLRDAAKRCLSARTRPSASDLCGVFKSVNVAATV.

An N-terminal signal peptide occupies residues 1–19 (MKIHHFLTLLCTFLPLTTT). At 20 to 470 (ALTNSTPLSL…QASDIPTSVE (451 aa)) the chain is on the extracellular side. Residues Asn-62, Asn-126, Asn-183, Asn-214, Asn-251, and Asn-372 are each glycosylated (N-linked (GlcNAc...) asparagine). The helical transmembrane segment at 471–491 (LMAVVLATSAIFALIALFLLY) threads the bilayer. Over 492 to 966 (RKRKRDKKAR…FKSVNVAATV (475 aa)) the chain is Cytoplasmic. The Protein kinase domain occupies 656 to 966 (HNFNERIEKQ…FKSVNVAATV (311 aa)). Residues 662–670 (IEKQAYWLM) and Lys-685 contribute to the ATP site.

The protein belongs to the protein kinase superfamily.

It is found in the cell membrane. Functionally, during early embryogenesis, controls asymmetric cell division and the asymmetric localization of P granules of germline precursor P2 and its descendant P3. Probably upstream of tyrosine kinase src-1, plays a role in endoderm development by controlling spindle orientation during EMS blastomere cell division. Controls EMS spindle orientation probably by promoting lin-5 and gpr-1/2 enrichment at, and let-99 exclusion from the junction between P2 and EMS cells. The chain is Protein mes-1 from Caenorhabditis elegans.